The sequence spans 273 residues: MSATAKKSAAQLQREEEEARKKLKRLSKQGGVEGRLPMKRLFRQRAHANVLSDHELEYPRSPSEMDWSPYYPDFDVESNKKVEIVDIGCGYGGLTVALGPQFPDTLVLGMEIRMQVSDYLKEKIQALRYRADHEEPVPGGYKNISVLRMNCQKFLPNFFEKGQLSKMFFCFPDPHFKARKHKNRIITSTLASEYAYFIRPHGTLYTITDVEELHVWMAQHLDAHPLFRRFTKEEEENDICVTLMTNETEEGKKVARNGGKKFVACYERIPNPK.

Residues 1 to 32 (MSATAKKSAAQLQREEEEARKKLKRLSKQGGV) form a disordered region. S-adenosyl-L-methionine is bound by residues glycine 88, 111 to 112 (EI), 150 to 151 (NC), and cysteine 170. Residue aspartate 173 is part of the active site. Position 248–250 (248–250 (TEE)) interacts with S-adenosyl-L-methionine.

This sequence belongs to the class I-like SAM-binding methyltransferase superfamily. TrmB family. In terms of assembly, forms a complex with trm82.

The protein localises to the nucleus. It carries out the reaction guanosine(46) in tRNA + S-adenosyl-L-methionine = N(7)-methylguanosine(46) in tRNA + S-adenosyl-L-homocysteine. Its pathway is tRNA modification; N(7)-methylguanine-tRNA biosynthesis. Catalyzes the formation of N(7)-methylguanine at position 46 (m7G46) in tRNA. The polypeptide is tRNA (guanine-N(7)-)-methyltransferase (trm8) (Schizosaccharomyces pombe (strain 972 / ATCC 24843) (Fission yeast)).